Here is a 349-residue protein sequence, read N- to C-terminus: Isopentenyl-diphosphate delta-isomerase (349 aa).

9-10 provides a ligand contact to substrate; sequence RK. Residues 65–67, S95, and N124 each bind FMN; that span reads AMT. Position 95 to 97 (95 to 97) interacts with substrate; sequence STH. Substrate is bound at residue Q154. Residue E155 coordinates Mg(2+). Residues K186, S211, T216, 262-264, and 283-284 each bind FMN; these read GLR and SR.

This sequence belongs to the IPP isomerase type 2 family. As to quaternary structure, homooctamer. Dimer of tetramers. Requires FMN as cofactor. NADPH serves as cofactor. It depends on Mg(2+) as a cofactor.

The protein localises to the cytoplasm. The enzyme catalyses isopentenyl diphosphate = dimethylallyl diphosphate. In terms of biological role, involved in the biosynthesis of isoprenoids. Catalyzes the 1,3-allylic rearrangement of the homoallylic substrate isopentenyl (IPP) to its allylic isomer, dimethylallyl diphosphate (DMAPP). This chain is Isopentenyl-diphosphate delta-isomerase, found in Staphylococcus aureus (strain USA300 / TCH1516).